A 290-amino-acid polypeptide reads, in one-letter code: Fat storage-inducing transmembrane protein 1 (290 aa).

The Lumenal portion of the chain corresponds to 1-18 (MERGPVVGAGLGARARIR). Residues 19 to 39 (TLLGCLVKVLLWVASALLYFG) traverse the membrane as a helical segment. Over 40–54 (SEQAARLLGSPCLRR) the chain is Cytoplasmic. A helical transmembrane segment spans residues 55–75 (LYHAWLAAVVIFGPLLQFHVN). The Lumenal segment spans residues 76-94 (PRTIFASHGNFFNIKFVNS). Residues 95–115 (AWGWTCTFLGGFVLLVVFLAT) form a helical membrane-spanning segment. The Cytoplasmic segment spans residues 116–141 (RRVAVTARHLSRLVVGAAVWRGAGRA). A helical transmembrane segment spans residues 142 to 162 (FLLIEDLTGSCFEPLPQGLLL). Residues 163–187 (HELPDRRSRLAAGHQWRGYTVSSHT) are Lumenal-facing. His-186 is a catalytic residue. The helical transmembrane segment at 188–208 (FLLTFCCLLMAEEAAVFAKYL) threads the bilayer. Over 209-220 (AHGLPAGAPLRL) the chain is Cytoplasmic. Residues 221–241 (VFLLNVLLLGLWNFLLLCTVI) form a helical membrane-spanning segment. Residues 242-249 (YFHQYTHK) lie on the Lumenal side of the membrane. The active site involves His-244. The chain crosses the membrane as a helical span at residues 250-270 (VVGAAVGTFAWYLTYGSWYHQ). Residues 271–290 (PWSPGSPGHGLFTHPSRKHN) lie on the Cytoplasmic side of the membrane.

The protein belongs to the FIT family. FIT1 subfamily.

The protein resides in the endoplasmic reticulum membrane. In terms of biological role, plays an important role in the formation of lipid droplets (LDs) which are storage organelles at the center of lipid and energy homeostasis. Directly binds to diacylglycerol (DAGs) and triacylglycerol. This is Fat storage-inducing transmembrane protein 1 from Sus scrofa (Pig).